A 127-amino-acid chain; its full sequence is Large ribosomal subunit protein bL17 (127 aa).

Belongs to the bacterial ribosomal protein bL17 family. As to quaternary structure, part of the 50S ribosomal subunit. Contacts protein L32.

The chain is Large ribosomal subunit protein bL17 from Salmonella paratyphi A (strain AKU_12601).